Here is a 230-residue protein sequence, read N- to C-terminus: Large ribosomal subunit protein uL1 (230 aa).

This sequence belongs to the universal ribosomal protein uL1 family. As to quaternary structure, part of the 50S ribosomal subunit.

Its function is as follows. Binds directly to 23S rRNA. The L1 stalk is quite mobile in the ribosome, and is involved in E site tRNA release. In terms of biological role, protein L1 is also a translational repressor protein, it controls the translation of the L11 operon by binding to its mRNA. In Aster yellows witches'-broom phytoplasma (strain AYWB), this protein is Large ribosomal subunit protein uL1.